The sequence spans 502 residues: Cysteine protease RavZ (502 aa).

Short sequence motifs (LIR) lie at residues 9 to 23 (DKLI…GEQE) and 23 to 37 (ESDI…GDEK). The tract at residues 49-325 (SIYPPETSWE…ESALTEGKTL (277 aa)) is catalytic region. Catalysis depends on residues H176 and D197. An alpha-3 helix region spans residues 211 to 217 (YFKGKYR). C258 is an active-site residue. A membrane targeting region region spans residues 326-431 (PVQLSEFIVA…VLPCVKFDDT (106 aa)). Positions 429 to 443 (DDTIDDFVTIEKDEL) match the LIR 3 motif.

Its subcellular location is the secreted. The protein localises to the host cytoplasmic vesicle membrane. It catalyses the reaction [protein]-C-terminal L-amino acid-glycyl-phosphatidylethanolamide + H2O = a 1,2-diacyl-sn-glycero-3-phosphoethanolamine-N-glycine + [protein]-C-terminal &lt;stereo&gt;L-&lt;/stereo&gt;amino acid. The catalysed reaction is [protein]-C-terminal L-amino acid-glycyl-phosphatidylserine + H2O = 1,2-diacyl-sn-glycero-3-phospho-L-serine-N-glycine + [protein]-C-terminal &lt;stereo&gt;L-&lt;/stereo&gt;amino acid. Its function is as follows. Cysteine protease effector that inhibits host cell autophagy by targeting lipid-conjugated ATG8 family proteins on pre-autophagosomal structures. Specifically hydrolyzes the amide bond between the C-terminal glycine residue and an adjacent aromatic residue in ATG8 proteins conjugated to phosphatidylethanolamine (PE), producing an ATG8 protein that cannot be reconjugated by host ATG7 and ATG3. Mechanistically, Ravz interacts with ATG8 proteins conjugated to PE via its LIR motifs, extracts them from the membrane of autophagosomes and integrates the PE part into its own lipid-binding site. It then removes the lipid component of the ATG8 protein. Also able to mediate delipidation of ATG8 proteins conjugated to phosphatidylserine (PS) during non-canonical autophagy. Inhibits host ubiquitin recruitment to bacteria-containing vacuoles, suggesting that it is able to mediate delipidation of other proteins in addition to ATG8 proteins. It is however not involved in the exclusion of autophagy adapters from bacteria-containing vacuoles decorated with ubiquitin. The protein is Cysteine protease RavZ of Legionella pneumophila subsp. pneumophila (strain Philadelphia 1 / ATCC 33152 / DSM 7513).